Reading from the N-terminus, the 464-residue chain is Methionine aminopeptidase 2 (464 aa).

A disordered region spans residues 1 to 86 (MGSKTPGNHR…RKKKKKNTKE (86 aa)). The span at 43-54 (GESEGGEDEDDD) shows a compositional bias: acidic residues. The span at 72–83 (KRNKRRKKKKKN) shows a compositional bias: basic residues. A substrate-binding site is contributed by histidine 216. 3 residues coordinate a divalent metal cation: aspartate 237, aspartate 248, and histidine 317. Histidine 325 contributes to the substrate binding site. Positions 350 and 445 each coordinate a divalent metal cation.

Belongs to the peptidase M24A family. Methionine aminopeptidase eukaryotic type 2 subfamily. Co(2+) serves as cofactor. Requires Zn(2+) as cofactor. The cofactor is Mn(2+). Fe(2+) is required as a cofactor.

It is found in the cytoplasm. The enzyme catalyses Release of N-terminal amino acids, preferentially methionine, from peptides and arylamides.. Its function is as follows. Cotranslationally removes the N-terminal methionine from nascent proteins. The N-terminal methionine is often cleaved when the second residue in the primary sequence is small and uncharged (Met-Ala-, Cys, Gly, Pro, Ser, Thr, or Val). In Ajellomyces capsulatus (strain NAm1 / WU24) (Darling's disease fungus), this protein is Methionine aminopeptidase 2.